The sequence spans 272 residues: PHD finger protein ALFIN-LIKE 6 (272 aa).

Residues 1 to 23 show a composition bias toward gly residues; it reads MEGGGGGGGGGGGGGGGGGGGGA. Disordered stretches follow at residues 1–24 and 162–218; these read MEGG…GGAP and QAKE…DNTL. Residues 168–182 are compositionally biased toward low complexity; sequence PNSSSKSNKPSSKVQ. The span at 183-200 shows a compositional bias: basic and acidic residues; sequence SKAESRSKSKLSAPKDEE. The segment covering 201-214 has biased composition (acidic residues); the sequence is GSGDDEGEEEEDDH. A PHD-type zinc finger spans residues 216 to 268; that stretch reads NTLCGTCGTNDGKDEFWICCDNCEKWYHGKCVKITPARAEHIKQYKCPDCTNK.

Belongs to the Alfin family.

The protein resides in the nucleus. In terms of biological role, histone-binding component that specifically recognizes H3 tails trimethylated on 'Lys-4' (H3K4me3), which mark transcription start sites of virtually all active genes. In Oryza sativa subsp. indica (Rice), this protein is PHD finger protein ALFIN-LIKE 6.